The chain runs to 153 residues: Small ribosomal subunit protein uS11 (153 aa).

Belongs to the universal ribosomal protein uS11 family.

The chain is Small ribosomal subunit protein uS11 (RPS14) from Chlamydomonas reinhardtii (Chlamydomonas smithii).